Here is a 676-residue protein sequence, read N- to C-terminus: RNA helicase NPH-II (676 aa).

One can recognise a Helicase ATP-binding domain in the interval 172-347; sequence FSAWISHRPV…VFLPNPAFIH (176 aa). An ATP-binding site is contributed by 185-192; it reads GGTGVGKT. Positions 296 to 299 match the DEXH box motif; sequence DEVH. Residues 366-535 form the Helicase C-terminal domain; sequence NPSSRMAYIE…NYILYANKFN (170 aa).

The protein belongs to the DEAD box helicase family. DEAH subfamily. As to quaternary structure, monomer.

Its subcellular location is the virion. It carries out the reaction ATP + H2O = ADP + phosphate + H(+). Functionally, NTP-dependent helicase that catalyzes unidirectional unwinding of 3'tailed duplex RNAs and plays an important role during transcription of early mRNAs, presumably by preventing R-loop formation behind the elongating RNA polymerase. Might also play a role in the export of newly synthesized mRNA chains out of the core into the cytoplasm. Required for replication and propagation of viral particles. This chain is RNA helicase NPH-II (OPG084), found in Vaccinia virus (strain Copenhagen) (VACV).